We begin with the raw amino-acid sequence, 415 residues long: Lipoyl synthase, mitochondrial (415 aa).

The transit peptide at 1-32 (MAASTNRLRFLYSSARTVPQTGSITPISRRTY) directs the protein to the mitochondrion. Residues 22–32 (GSITPISRRTY) show a composition bias toward polar residues. The segment at 22–53 (GSITPISRRTYATTEPSPSATGAPATARKRTN) is disordered. Over residues 33–47 (ATTEPSPSATGAPAT) the composition is skewed to low complexity. [4Fe-4S] cluster-binding residues include Cys-132, Cys-137, Cys-143, Cys-163, Cys-167, Cys-170, and Ser-378. The 222-residue stretch at 146-367 (GSDKSAATAT…RQRALDMGFL (222 aa)) folds into the Radical SAM core domain. The segment at 395 to 415 (AAGTAGESVTDSKAAVDEATR) is disordered.

Belongs to the radical SAM superfamily. Lipoyl synthase family. It depends on [4Fe-4S] cluster as a cofactor.

It is found in the mitochondrion. It catalyses the reaction [[Fe-S] cluster scaffold protein carrying a second [4Fe-4S](2+) cluster] + N(6)-octanoyl-L-lysyl-[protein] + 2 oxidized [2Fe-2S]-[ferredoxin] + 2 S-adenosyl-L-methionine + 4 H(+) = [[Fe-S] cluster scaffold protein] + N(6)-[(R)-dihydrolipoyl]-L-lysyl-[protein] + 4 Fe(3+) + 2 hydrogen sulfide + 2 5'-deoxyadenosine + 2 L-methionine + 2 reduced [2Fe-2S]-[ferredoxin]. It participates in protein modification; protein lipoylation via endogenous pathway; protein N(6)-(lipoyl)lysine from octanoyl-[acyl-carrier-protein]: step 2/2. In terms of biological role, catalyzes the radical-mediated insertion of two sulfur atoms into the C-6 and C-8 positions of the octanoyl moiety bound to the lipoyl domains of lipoate-dependent enzymes, thereby converting the octanoylated domains into lipoylated derivatives. The protein is Lipoyl synthase, mitochondrial of Aspergillus oryzae (strain ATCC 42149 / RIB 40) (Yellow koji mold).